Here is a 178-residue protein sequence, read N- to C-terminus: Oligoribonuclease (178 aa).

The Exonuclease domain maps to 7–168 (LIWIDLEMTG…DDIRESIAEL (162 aa)). Tyrosine 128 is an active-site residue.

This sequence belongs to the oligoribonuclease family.

The protein localises to the cytoplasm. Its function is as follows. 3'-to-5' exoribonuclease specific for small oligoribonucleotides. This Francisella tularensis subsp. holarctica (strain FTNF002-00 / FTA) protein is Oligoribonuclease.